A 266-amino-acid polypeptide reads, in one-letter code: Diphthine synthase (266 aa).

S-adenosyl-L-methionine is bound by residues L9, D84, V87, 112–113 (SI), L169, A210, and H235.

This sequence belongs to the diphthine synthase family. As to quaternary structure, homodimer.

The enzyme catalyses 2-[(3S)-amino-3-carboxypropyl]-L-histidyl-[translation elongation factor 2] + 3 S-adenosyl-L-methionine = diphthine-[translation elongation factor 2] + 3 S-adenosyl-L-homocysteine + 3 H(+). It participates in protein modification; peptidyl-diphthamide biosynthesis. Its function is as follows. S-adenosyl-L-methionine-dependent methyltransferase that catalyzes the trimethylation of the amino group of the modified target histidine residue in translation elongation factor 2 (EF-2), to form an intermediate called diphthine. The three successive methylation reactions represent the second step of diphthamide biosynthesis. The sequence is that of Diphthine synthase from Methanosarcina barkeri (strain Fusaro / DSM 804).